A 31-amino-acid chain; its full sequence is Cytochrome b6-f complex subunit 8 (31 aa).

The helical transmembrane segment at 5 to 25 (IVSLAWAALMVVFTFSLSLVV) threads the bilayer.

This sequence belongs to the PetN family. The 4 large subunits of the cytochrome b6-f complex are cytochrome b6, subunit IV (17 kDa polypeptide, PetD), cytochrome f and the Rieske protein, while the 4 small subunits are PetG, PetL, PetM and PetN. The complex functions as a dimer.

It localises to the plastid. It is found in the chloroplast thylakoid membrane. Its function is as follows. Component of the cytochrome b6-f complex, which mediates electron transfer between photosystem II (PSII) and photosystem I (PSI), cyclic electron flow around PSI, and state transitions. The sequence is that of Cytochrome b6-f complex subunit 8 from Acorus calamus (Sweet flag).